The chain runs to 476 residues: Siroheme synthase 1 (476 aa).

The tract at residues 1-203 is precorrin-2 dehydrogenase /sirohydrochlorin ferrochelatase; it reads MDYLPIFADL…GQTAEAQRQL (203 aa). Residues 22-23 and 43-44 contribute to the NAD(+) site; these read EV and QS. Serine 128 is modified (phosphoserine). The tract at residues 219–476 is uroporphyrinogen-III C-methyltransferase; that stretch reads GEIALVGAGP…VSRPAVVNLA (258 aa). Proline 228 is an S-adenosyl-L-methionine binding site. Residue aspartate 251 is the Proton acceptor of the active site. The Proton donor role is filled by lysine 273. S-adenosyl-L-methionine is bound by residues 304-306, isoleucine 309, 334-335, methionine 386, and glycine 415; these read GGD and TA.

This sequence in the N-terminal section; belongs to the precorrin-2 dehydrogenase / sirohydrochlorin ferrochelatase family. It in the C-terminal section; belongs to the precorrin methyltransferase family.

It carries out the reaction uroporphyrinogen III + 2 S-adenosyl-L-methionine = precorrin-2 + 2 S-adenosyl-L-homocysteine + H(+). The enzyme catalyses precorrin-2 + NAD(+) = sirohydrochlorin + NADH + 2 H(+). It catalyses the reaction siroheme + 2 H(+) = sirohydrochlorin + Fe(2+). The protein operates within cofactor biosynthesis; adenosylcobalamin biosynthesis; precorrin-2 from uroporphyrinogen III: step 1/1. It participates in cofactor biosynthesis; adenosylcobalamin biosynthesis; sirohydrochlorin from precorrin-2: step 1/1. It functions in the pathway porphyrin-containing compound metabolism; siroheme biosynthesis; precorrin-2 from uroporphyrinogen III: step 1/1. Its pathway is porphyrin-containing compound metabolism; siroheme biosynthesis; siroheme from sirohydrochlorin: step 1/1. The protein operates within porphyrin-containing compound metabolism; siroheme biosynthesis; sirohydrochlorin from precorrin-2: step 1/1. Functionally, multifunctional enzyme that catalyzes the SAM-dependent methylations of uroporphyrinogen III at position C-2 and C-7 to form precorrin-2 via precorrin-1. Then it catalyzes the NAD-dependent ring dehydrogenation of precorrin-2 to yield sirohydrochlorin. Finally, it catalyzes the ferrochelation of sirohydrochlorin to yield siroheme. In Serratia proteamaculans (strain 568), this protein is Siroheme synthase 1.